We begin with the raw amino-acid sequence, 197 residues long: Probable host range protein 2 (197 aa).

The disordered stretch occupies residues 172–197 (DHDDNDNADDDEEDDDEVNDIEDDYE). Over residues 174-197 (DDNDNADDDEEDDDEVNDIEDDYE) the composition is skewed to acidic residues.

It belongs to the poxviridae C7 protein family.

This Ovis aries (Sheep) protein is Probable host range protein 2.